Here is a 350-residue protein sequence, read N- to C-terminus: Putative aminopeptidase MJ0555 (350 aa).

His62 and Asp175 together coordinate a divalent metal cation. Glu207 functions as the Proton acceptor in the catalytic mechanism. 3 residues coordinate a divalent metal cation: Glu208, Asp230, and His321.

It belongs to the peptidase M42 family. A divalent metal cation serves as cofactor.

The chain is Putative aminopeptidase MJ0555 from Methanocaldococcus jannaschii (strain ATCC 43067 / DSM 2661 / JAL-1 / JCM 10045 / NBRC 100440) (Methanococcus jannaschii).